Reading from the N-terminus, the 544-residue chain is Methionine--tRNA ligase (544 aa).

Residues 10-20 (PYANGSLHLGH) carry the 'HIGH' region motif. Residues Cys-141, Cys-144, Cys-153, and Cys-156 each coordinate Zn(2+). The 'KMSKS' region motif lies at 329 to 333 (KLSTS). Thr-332 serves as a coordination point for ATP.

The protein belongs to the class-I aminoacyl-tRNA synthetase family. MetG type 1 subfamily. As to quaternary structure, monomer. Requires Zn(2+) as cofactor.

The protein resides in the cytoplasm. The enzyme catalyses tRNA(Met) + L-methionine + ATP = L-methionyl-tRNA(Met) + AMP + diphosphate. Functionally, is required not only for elongation of protein synthesis but also for the initiation of all mRNA translation through initiator tRNA(fMet) aminoacylation. The protein is Methionine--tRNA ligase of Bacillus cereus (strain G9842).